The chain runs to 180 residues: uncharacterized protein (180 aa).

Positions 1–24 (MKKKTIFQCVILFFSILNIHVGMA) are cleaved as a signal peptide.

In terms of biological role, part of the elfADCG-ycbUVF fimbrial operon, which promotes adhesion of bacteria to different abiotic surfaces. This is an uncharacterized protein from Escherichia coli (strain K12).